A 190-amino-acid chain; its full sequence is Putative glutathione-dependent formaldehyde-activating enzyme (190 aa).

A CENP-V/GFA domain is found at 19–165; the sequence is FKGGKLYCHC…FRKVGLQPYD (147 aa). The Zn(2+) site is built by Cys-26, Cys-28, Cys-47, Cys-49, Cys-52, Cys-94, and Cys-97.

Belongs to the Gfa family. It depends on Zn(2+) as a cofactor.

The enzyme catalyses S-(hydroxymethyl)glutathione = glutathione + formaldehyde. Its pathway is one-carbon metabolism; formaldehyde degradation; formate from formaldehyde (glutathione route): step 1/3. Functionally, catalyzes the condensation of formaldehyde and glutathione to S-hydroxymethylglutathione. This is Putative glutathione-dependent formaldehyde-activating enzyme from Pyrenophora teres f. teres (strain 0-1) (Barley net blotch fungus).